We begin with the raw amino-acid sequence, 224 residues long: MTANQIAYQKHLETARVNAVGEMQRGLELDESRRHNISQEQLKTRELTELERSNRAVEKETSRHNVVTETETRRSNLAREWETYRSNSAREMETQRSNISYEAIKRGQLALDRAELNESIRATNENLALQYSKLQTESLLTQRGQDLQHKNAIIGASANAFGSLLGYSTASADRASREEIASANRKSQEHIASMQVLGSMANTMFSSVSNLVGKTAGAFAGGLS.

Positions 108–137 form a coiled coil; that stretch reads QLALDRAELNESIRATNENLALQYSKLQTE.

This is an uncharacterized protein from Human picobirnavirus (strain Human/Thailand/Hy005102/-) (PBV).